The primary structure comprises 1085 residues: Ubiquitin carboxyl-terminal hydrolase 36 (1085 aa).

Residues 23 to 36 (GGNSSAAGSSADQA) show a composition bias toward low complexity. Disordered stretches follow at residues 23–47 (GGNSSAAGSSADQAKSGEESNGSLQ) and 104–149 (KVVG…PKPK). The USP domain maps to 173 to 481 (TGMINVGNTC…NAYIMFYELD (309 aa)). The active-site Nucleophile is Cys182. The active-site Proton acceptor is the His440. 4 disordered regions span residues 489-730 (AANR…NNSK), 745-888 (KSAD…ELLK), 963-1030 (EQRQ…FYNQ), and 1043-1085 (KFNR…QQQS). The segment covering 503-518 (STTPVPATTVSSPSPT) has biased composition (low complexity). Residues Ser514 and Ser516 each carry the phosphoserine modification. Positions 532–542 (GYSNGNAQKTA) are enriched in polar residues. Low complexity predominate over residues 588–609 (NGNKSSSTSSNNSSSSNHKSIN). The segment covering 642 to 651 (MTDDHTEKPK) has biased composition (basic and acidic residues). 2 positions are modified to phosphothreonine: Thr660 and Thr664. A phosphoserine mark is found at Ser674 and Ser676. Over residues 705–730 (TNGHSKTNGSLTNGSASSSVHVNNSK) the composition is skewed to polar residues. The residue at position 749 (Ser749) is a Phosphoserine. Acidic residues predominate over residues 749–758 (SDDDDDEEES). Low complexity predominate over residues 768–778 (PQKQSQSQSKA). Positions 779–788 (PPSPKTPPSP) are enriched in pro residues. Position 781 is a phosphoserine (Ser781). A Phosphothreonine modification is found at Thr784. Residue Ser787 is modified to Phosphoserine. Residues 805–818 (EVDDIDDDDDEEEE) show a composition bias toward acidic residues. Residues 822-844 (KIQTPSKTHRNPFSSSKPSTDSP) are compositionally biased toward polar residues. A Phosphothreonine modification is found at Thr825. Position 843 is a phosphoserine (Ser843). The residue at position 846 (Thr846) is a Phosphothreonine. The segment covering 859-884 (PVKSHQQPRVGNGYQSEATSNGSTIN) has biased composition (polar residues). 2 stretches are compositionally biased toward low complexity: residues 987–998 (SGSAKGNNASNS) and 1056–1066 (QQQRALQRHLA).

Belongs to the peptidase C19 family. As to quaternary structure, interacts with atms/PAF1, but not with CycT.

The protein localises to the nucleus. It localises to the nucleolus. The catalysed reaction is Thiol-dependent hydrolysis of ester, thioester, amide, peptide and isopeptide bonds formed by the C-terminal Gly of ubiquitin (a 76-residue protein attached to proteins as an intracellular targeting signal).. Its function is as follows. Required for maintaining multiple types of adult stem cells, including male and female germline, epithelial follicle cell and intestinal stem cells. May function as a transcriptional repressor by continually deubiquiting histone H2B at the promoters of genes critical for cellular differentiation, thereby preventing histone H3 'Lys-4' trimethylation (H3K4). Controls selective autophagy activation by ubiquitinated proteins. This Drosophila erecta (Fruit fly) protein is Ubiquitin carboxyl-terminal hydrolase 36 (Usp36).